The chain runs to 122 residues: Large ribosomal subunit protein uL14 (122 aa).

The protein belongs to the universal ribosomal protein uL14 family. In terms of assembly, part of the 50S ribosomal subunit. Forms a cluster with proteins L3 and L19. In the 70S ribosome, L14 and L19 interact and together make contacts with the 16S rRNA in bridges B5 and B8.

Functionally, binds to 23S rRNA. Forms part of two intersubunit bridges in the 70S ribosome. This is Large ribosomal subunit protein uL14 from Rhizobium etli (strain CIAT 652).